Reading from the N-terminus, the 349-residue chain is Putative transport protein YhhT (349 aa).

Over 1 to 10 (METPQPDKTG) the chain is Cytoplasmic. Residues 11-31 (MHILLKLASLVVILAGIHAAA) form a helical membrane-spanning segment. Residue D32 is a topological domain, periplasmic. Residues 33-53 (IIVQLLLALFFAIVLNPLVTW) traverse the membrane as a helical segment. Residues 54–62 (FIRRGVQRP) are Cytoplasmic-facing. A helical transmembrane segment spans residues 63-83 (VAITIVVVVMLIALTALVGVL). Residues 84-142 (AASFNEFISMLPKFNKELTRKLFKLQEMLPFLNLHMSPERMLQRMDSEKVVTFTTALMT) are Periplasmic-facing. The chain crosses the membrane as a helical span at residues 143 to 163 (GLSGAMASVLLLVMTVVFMLF). At 164–208 (EVRHVPYKMRFALNNPQIHIAGLHRALKGVSHYLALKTLLSLWTG) the chain is on the cytoplasmic side. The helical transmembrane segment at 209 to 229 (VIVWLGLELMGVQFALMWAVL) threads the bilayer. Residues 230–234 (AFLLN) are Periplasmic-facing. The chain crosses the membrane as a helical span at residues 235–255 (YVPNIGAVISAVPPMIQVLLF). The Cytoplasmic segment spans residues 256-257 (NG). A helical membrane pass occupies residues 258–278 (VYECILVGALFLVVHMVIGNI). The Periplasmic segment spans residues 279 to 292 (LEPRMMGHRLGMST). A helical membrane pass occupies residues 293–313 (MVVFLSLLIWGWLLGPVGMLL). The Cytoplasmic portion of the chain corresponds to 314-349 (SVPLTSVCKIWMETTKGGSKLAILLGPGRPKSRLPG).

This sequence belongs to the autoinducer-2 exporter (AI-2E) (TC 2.A.86) family.

It is found in the cell inner membrane. In Escherichia coli O157:H7, this protein is Putative transport protein YhhT (yhhT).